The sequence spans 377 residues: Succinyl-diaminopimelate desuccinylase (377 aa).

Residue histidine 66 participates in Zn(2+) binding. Residue aspartate 68 is part of the active site. A Zn(2+)-binding site is contributed by aspartate 99. Glutamate 133 (proton acceptor) is an active-site residue. Residues glutamate 134, glutamate 162, and histidine 348 each coordinate Zn(2+).

This sequence belongs to the peptidase M20A family. DapE subfamily. In terms of assembly, homodimer. Zn(2+) is required as a cofactor. Co(2+) serves as cofactor.

The catalysed reaction is N-succinyl-(2S,6S)-2,6-diaminopimelate + H2O = (2S,6S)-2,6-diaminopimelate + succinate. It functions in the pathway amino-acid biosynthesis; L-lysine biosynthesis via DAP pathway; LL-2,6-diaminopimelate from (S)-tetrahydrodipicolinate (succinylase route): step 3/3. In terms of biological role, catalyzes the hydrolysis of N-succinyl-L,L-diaminopimelic acid (SDAP), forming succinate and LL-2,6-diaminopimelate (DAP), an intermediate involved in the bacterial biosynthesis of lysine and meso-diaminopimelic acid, an essential component of bacterial cell walls. The sequence is that of Succinyl-diaminopimelate desuccinylase from Histophilus somni (strain 2336) (Haemophilus somnus).